Consider the following 352-residue polypeptide: NADP-dependent oxidoreductase RED1 (352 aa).

Residues 166 to 169, Lys192, Tyr208, Asn231, and 285 to 287 each bind NADP(+); these read GAVG and FIV.

This sequence belongs to the NADP-dependent oxidoreductase L4BD family.

It functions in the pathway mycotoxin biosynthesis. Functionally, NADP-dependent oxidoreductase; part of the Tox1B locus, one of the 2 loci that mediate the biosynthesis of T-toxin, a family of linear polyketides 37 to 45 carbons in length, of which the major component is 41 carbons, and which leads to high virulence to maize. One of the PKSs (PKS1 or PKS2) could synthesize a precursor, used subsequently by the other PKS as starter unit, to add additional carbons. Variability in the length of the final carbon backbone C35-47 could be achieved by varying the number of condensation cycles, or use of different starter or extender units or might be due to decarboxylation of the penultimate product, catalyzed by DEC1. Additional proteins are required for the biosynthesis of T-toxin, including oxidoreductases RED1, RED2, RED3, LAM1 and OXI1, as well as esterase TOX9. In Cochliobolus heterostrophus (strain C4 / ATCC 48331 / race T) (Southern corn leaf blight fungus), this protein is NADP-dependent oxidoreductase RED1.